A 212-amino-acid polypeptide reads, in one-letter code: Ribosomal RNA small subunit methyltransferase G (212 aa).

Residues G80, L85, 131-132 (AE), and R146 each bind S-adenosyl-L-methionine.

Belongs to the methyltransferase superfamily. RNA methyltransferase RsmG family.

It is found in the cytoplasm. The catalysed reaction is guanosine(527) in 16S rRNA + S-adenosyl-L-methionine = N(7)-methylguanosine(527) in 16S rRNA + S-adenosyl-L-homocysteine. Functionally, specifically methylates the N7 position of guanine in position 527 of 16S rRNA. This chain is Ribosomal RNA small subunit methyltransferase G, found in Xanthomonas oryzae pv. oryzae (strain KACC10331 / KXO85).